The sequence spans 565 residues: Cytokinin dehydrogenase 2 (565 aa).

The first 20 residues, 1-20 (MKQEQVRMAVLLMLNCFVKA), serve as a signal peptide directing secretion. N-linked (GlcNAc...) asparagine glycosylation is present at asparagine 64. The 182-residue stretch at 74 to 255 (RLAAAAAVLY…TRARIPLAPA (182 aa)) folds into the FAD-binding PCMH-type domain. FAD is bound by residues alanine 108, glycine 110, and glycine 112. Residue histidine 113 is modified to Pros-8alpha-FAD histidine. FAD-binding residues include serine 114, glutamine 118, aspartate 179, threonine 184, serine 190, isoleucine 194, and isoleucine 245. N-linked (GlcNAc...) asparagine glycosylation is present at asparagine 464. 3 residues coordinate FAD: tyrosine 517, serine 554, and glutamine 557.

The protein belongs to the oxygen-dependent FAD-linked oxidoreductase family. As to quaternary structure, monomer. It depends on FAD as a cofactor. In terms of processing, glycosylated. As to expression, mostly expressed in leaves, culms, inflorescence meristems, and flowers, especially in vascular tissues.

The protein localises to the secreted. It localises to the extracellular space. It carries out the reaction N(6)-dimethylallyladenine + A + H2O = 3-methyl-2-butenal + adenine + AH2. Catalyzes the oxidation of cytokinins, a family of N(6)-substituted adenine derivatives that are plant hormones, where the substituent is an isopentenyl group. Is a major QTL involved in grain yield. Modulates the number of reproductive organs by regulating the cytokinin accumulation in inflorescence meristems. Acts as negative regulator of panicle branching. This is Cytokinin dehydrogenase 2 from Oryza sativa subsp. japonica (Rice).